A 364-amino-acid polypeptide reads, in one-letter code: Phosphoserine aminotransferase (364 aa).

Arg42 contributes to the L-glutamate binding site. Pyridoxal 5'-phosphate-binding positions include 76–77 (AS), Trp100, Thr150, Asp169, and Gln192. An N6-(pyridoxal phosphate)lysine modification is found at Lys193. Position 234–235 (234–235 (NT)) interacts with pyridoxal 5'-phosphate.

It belongs to the class-V pyridoxal-phosphate-dependent aminotransferase family. SerC subfamily. As to quaternary structure, homodimer. The cofactor is pyridoxal 5'-phosphate.

It is found in the cytoplasm. The catalysed reaction is O-phospho-L-serine + 2-oxoglutarate = 3-phosphooxypyruvate + L-glutamate. It catalyses the reaction 4-(phosphooxy)-L-threonine + 2-oxoglutarate = (R)-3-hydroxy-2-oxo-4-phosphooxybutanoate + L-glutamate. It functions in the pathway amino-acid biosynthesis; L-serine biosynthesis; L-serine from 3-phospho-D-glycerate: step 2/3. Its function is as follows. Catalyzes the reversible conversion of 3-phosphohydroxypyruvate to phosphoserine and of 3-hydroxy-2-oxo-4-phosphonooxybutanoate to phosphohydroxythreonine. This chain is Phosphoserine aminotransferase, found in Shouchella clausii (strain KSM-K16) (Alkalihalobacillus clausii).